Consider the following 154-residue polypeptide: uncharacterized protein (154 aa).

This is an uncharacterized protein from Saccharomyces cerevisiae (strain ATCC 204508 / S288c) (Baker's yeast).